Reading from the N-terminus, the 135-residue chain is Small ribosomal subunit protein bS18 (135 aa).

Residues 1–65 (MARPDMGGPK…GDEGGGRRGF (65 aa)) form a disordered region. Over residues 9–41 (PKMGGGFGGPRSGGFGGGGGGGGFGGGGFGGGR) the composition is skewed to gly residues. The span at 42-61 (GGDRGDRGDRDDRGGDEGGG) shows a compositional bias: basic and acidic residues.

It belongs to the bacterial ribosomal protein bS18 family. In terms of assembly, part of the 30S ribosomal subunit. Forms a tight heterodimer with protein bS6.

Binds as a heterodimer with protein bS6 to the central domain of the 16S rRNA, where it helps stabilize the platform of the 30S subunit. The polypeptide is Small ribosomal subunit protein bS18 (Anaeromyxobacter dehalogenans (strain 2CP-C)).